Here is a 106-residue protein sequence, read N- to C-terminus: ATP-dependent Clp protease adapter protein ClpS (106 aa).

The segment covering 1 to 10 has biased composition (basic and acidic residues); sequence MSQKTVHDQD. Residues 1 to 22 form a disordered region; sequence MSQKTVHDQDNALLLETGNTKV.

The protein belongs to the ClpS family. Binds to the N-terminal domain of the chaperone ClpA.

Functionally, involved in the modulation of the specificity of the ClpAP-mediated ATP-dependent protein degradation. The chain is ATP-dependent Clp protease adapter protein ClpS from Xylella fastidiosa (strain 9a5c).